We begin with the raw amino-acid sequence, 565 residues long: Protein NRT1/ PTR FAMILY 5.15 (565 aa).

A run of 2 helical transmembrane segments spans residues 49-67 (FAYFGIACNLITYLTGPLG) and 80-100 (WSGTASILPILGAFVADAYLG). A Phosphothreonine modification is found at T104. The next 10 helical transmembrane spans lie at 110–130 (LIYILGLGLLTLSASLIIMGL), 142–162 (SIWVNTLFFCSLYLVAIGQGG), 189–209 (FFNWWFLSLSAGISISIIVVA), 217–237 (WAFGFGIPCLFMVMALAIFLL), 331–351 (IPIWITYVVSTIPYAQYITFF), 368–388 (IPAASLLSFVGVSILISVPLY), 409–429 (LQRIGAGMVLSVFNMMLAALV), 454–474 (IWWFVPQYLLLGMIDLFSMVG), 490–510 (IGLSLSLSAMGLSSFLSGFLI), and 534–554 (YFYWLLAAFTAIAFFAFLFIS).

Belongs to the major facilitator superfamily. Proton-dependent oligopeptide transporter (POT/PTR) (TC 2.A.17) family. As to expression, expressed in shoots, roots and leaves.

The protein resides in the membrane. The polypeptide is Protein NRT1/ PTR FAMILY 5.15 (NPF5.15) (Arabidopsis thaliana (Mouse-ear cress)).